Here is a 126-residue protein sequence, read N- to C-terminus: uncharacterized protein (126 aa).

Residues Met1–Met23 form the signal peptide.

This is an uncharacterized protein from Archaeoglobus fulgidus (strain ATCC 49558 / DSM 4304 / JCM 9628 / NBRC 100126 / VC-16).